Here is a 144-residue protein sequence, read N- to C-terminus: uncharacterized protein (144 aa).

The chain crosses the membrane as a helical span at residues 25-47 (LTLLDGCCVALVLALTAWSGFFV).

Its subcellular location is the membrane. This is an uncharacterized protein from Treponema pallidum (strain Nichols).